The sequence spans 412 residues: WW domain-containing oxidoreductase (412 aa).

A disordered region spans residues 1-24 (MAALKYAGMEDTDSEDELPPGWEE). One can recognise a WW 1 domain in the interval 16–49 (DELPPGWEERSTKDGWVYYANHEEMKTQWEHPKT). The Nuclear localization signal signature appears at 50–55 (GKKKRC). The region spanning 57 to 90 (GALPYGWEQETDDKGQIFYVDHINKRKTYFDPRQ) is the WW 2 domain. Residue 128–134 (GANSGIG) participates in NADP(+) binding. Serine 257 is a binding site for substrate. The active-site Proton acceptor is the tyrosine 290.

The protein belongs to the short-chain dehydrogenases/reductases (SDR) family.

It localises to the cytoplasm. The protein resides in the mitochondrion. It is found in the golgi apparatus. The protein localises to the lysosome. Its function is as follows. Putative oxidoreductase. Acts as a tumor suppressor and plays a role in apoptosis. May function synergistically with p53/TP53 to control genotoxic stress-induced cell death. Plays a role in TGFB1 signaling and TGFB1-mediated cell death. May also play a role in tumor necrosis factor (TNF)-mediated cell death. Required for normal bone development. Inhibits Wnt signaling. This Danio rerio (Zebrafish) protein is WW domain-containing oxidoreductase (wwox).